The primary structure comprises 461 residues: D-phenylhydantoinase (461 aa).

A divalent metal cation-binding residues include His-59, His-61, and Lys-151. Lys-151 is modified (N6-carboxylysine). Tyr-156 is a binding site for substrate. 2 residues coordinate a divalent metal cation: His-182 and His-239. Ser-286 contributes to the substrate binding site. Asp-313 is an a divalent metal cation binding site. Asn-335 contacts substrate.

This sequence belongs to the metallo-dependent hydrolases superfamily. Hydantoinase/dihydropyrimidinase family. Homotetramer. Requires a divalent metal cation as cofactor. In terms of processing, carboxylation allows a single lysine to coordinate two divalent metal cations.

It carries out the reaction D-5-phenylhydantoin + H2O = N-carbamoyl-D-phenylglycine + H(+). Catalyzes the stereospecific hydrolysis of the cyclic amide bond of D-hydantoin derivatives with an aromatic side chains at the 5'-position. Has no activity on dihydropyrimidines. The physiological function is unknown. The protein is D-phenylhydantoinase of Escherichia coli O127:H6 (strain E2348/69 / EPEC).